A 363-amino-acid polypeptide reads, in one-letter code: Phosphoserine aminotransferase (363 aa).

2 residues coordinate L-glutamate: Ser-9 and Arg-42. Residues 76–77, Trp-102, Thr-154, Asp-174, and Gln-197 each bind pyridoxal 5'-phosphate; that span reads AR. Lys-198 carries the post-translational modification N6-(pyridoxal phosphate)lysine. 240–241 provides a ligand contact to pyridoxal 5'-phosphate; the sequence is NT.

This sequence belongs to the class-V pyridoxal-phosphate-dependent aminotransferase family. SerC subfamily. Homodimer. Pyridoxal 5'-phosphate is required as a cofactor.

Its subcellular location is the cytoplasm. The catalysed reaction is O-phospho-L-serine + 2-oxoglutarate = 3-phosphooxypyruvate + L-glutamate. It carries out the reaction 4-(phosphooxy)-L-threonine + 2-oxoglutarate = (R)-3-hydroxy-2-oxo-4-phosphooxybutanoate + L-glutamate. It functions in the pathway amino-acid biosynthesis; L-serine biosynthesis; L-serine from 3-phospho-D-glycerate: step 2/3. It participates in cofactor biosynthesis; pyridoxine 5'-phosphate biosynthesis; pyridoxine 5'-phosphate from D-erythrose 4-phosphate: step 3/5. Functionally, catalyzes the reversible conversion of 3-phosphohydroxypyruvate to phosphoserine and of 3-hydroxy-2-oxo-4-phosphonooxybutanoate to phosphohydroxythreonine. The chain is Phosphoserine aminotransferase from Baumannia cicadellinicola subsp. Homalodisca coagulata.